A 190-amino-acid chain; its full sequence is Glycerol-3-phosphate acyltransferase 2 (190 aa).

5 helical membrane passes run 1–21 (MNIL…ALIV), 53–73 (VIVA…PLIL), 76–96 (TINP…SVFA), 110–130 (VFLF…VLTL), and 152–172 (LIFE…SIII).

This sequence belongs to the PlsY family. In terms of assembly, probably interacts with PlsX.

It localises to the cell membrane. The enzyme catalyses an acyl phosphate + sn-glycerol 3-phosphate = a 1-acyl-sn-glycero-3-phosphate + phosphate. The protein operates within lipid metabolism; phospholipid metabolism. Catalyzes the transfer of an acyl group from acyl-phosphate (acyl-PO(4)) to glycerol-3-phosphate (G3P) to form lysophosphatidic acid (LPA). This enzyme utilizes acyl-phosphate as fatty acyl donor, but not acyl-CoA or acyl-ACP. In Bacillus anthracis, this protein is Glycerol-3-phosphate acyltransferase 2.